The sequence spans 927 residues: Non-lysosomal glucosylceramidase (927 aa).

A disordered region spans residues 32-62 (EETGGTKDVQVTDCKSPEDSRPPKETDCCNP). Basic and acidic residues predominate over residues 46 to 58 (KSPEDSRPPKETD).

It belongs to the non-lysosomal glucosylceramidase family. Widely expressed. Mainly expressed in brain, heart, skeletal muscle, kidney and placenta and expressed at lower levels in liver, spleen, small intestine and lung. Detectable in colon, thymus and peripheral blood leukocytes.

It is found in the endoplasmic reticulum membrane. The protein localises to the golgi apparatus membrane. It carries out the reaction a beta-D-glucosyl-(1&lt;-&gt;1')-N-acylsphing-4-enine + H2O = an N-acylsphing-4-enine + D-glucose. The enzyme catalyses a beta-D-galactosyl-(1&lt;-&gt;1')-N-acylsphing-4-enine + H2O = an N-acylsphing-4-enine + D-galactose. It catalyses the reaction beta-D-glucosyl-(1-&gt;3)-O-lithocholate + H2O = lithocholate + D-glucose. The catalysed reaction is beta-D-glucosyl-(1-&gt;3)-O-chenodeoxycholate + H2O = chenodeoxycholate + D-glucose. It carries out the reaction a di-trans,poly-cis-dolichyl beta-D-glucosyl phosphate + chenodeoxycholate = beta-D-glucosyl-(1-&gt;3)-O-chenodeoxycholate + a di-trans,poly-cis-dolichyl phosphate + H(+). The enzyme catalyses octyl beta-D-glucose + chenodeoxycholate = beta-D-glucosyl-(1-&gt;3)-O-chenodeoxycholate + octan-1-ol. It catalyses the reaction cholesteryl 3-beta-D-glucoside + H2O = cholesterol + D-glucose. The catalysed reaction is a beta-D-glucosyl-(1&lt;-&gt;1')-N-acylsphing-4-enine + cholesterol = cholesteryl 3-beta-D-glucoside + an N-acylsphing-4-enine. It carries out the reaction beta-D-glucosyl-N-(9Z-octadecenoyl)-sphing-4E-enine + cholesterol = N-(9Z-octadecenoyl)-sphing-4-enine + cholesteryl 3-beta-D-glucoside. The enzyme catalyses a beta-D-galactosyl-(1&lt;-&gt;1')-N-acylsphing-4-enine + cholesterol = cholesteryl 3-beta-D-galactoside + an N-acylsphing-4-enine. It catalyses the reaction 1-(beta-D-galactosyl)-N-dodecanoylsphing-4-enine + cholesterol = cholesteryl 3-beta-D-galactoside + N-dodecanoylsphing-4-enine. The protein operates within lipid metabolism; sphingolipid metabolism. It functions in the pathway steroid metabolism; cholesterol metabolism. Its activity is regulated as follows. Inhibited by AMP-DMN/N -((5-adamantane-1-yl-methoxy)pentyl)-deoxynojirimycin. Activated by Mn(2+), Co(2+) and Mg(2+) and inhibited by Zn(2+). Enzymatic activity is dependent on membrane association and requires the presence of lipids. The membrane-associated enzyme is not inhibited by condutiriol B epoxide and bromocondutiriol B epoxide. Its function is as follows. Non-lysosomal glucosylceramidase that catalyzes the hydrolysis of glucosylceramides/GlcCers (such as beta-D-glucosyl-(1&lt;-&gt;1')-N-acylsphing-4-enine) to free glucose and ceramides (such as N-acylsphing-4-enine). GlcCers are membrane glycosphingolipids that have a wide intracellular distribution. They are the main precursors of more complex glycosphingolipids that play a role in cellular growth, differentiation, adhesion, signaling, cytoskeletal dynamics and membrane properties. Involved in the transglucosylation of cholesterol, transfers glucose from GlcCer to cholesterol, thereby modifying its water solubility and biological properties. Under specific conditions, may catalyze the reverse reaction, transferring glucose from cholesteryl-3-beta-D-glucoside to ceramide (such as N-acylsphing-4-enine). May play a role in the metabolism of bile acids. Able to hydrolyze bile acid 3-O-glucosides as well as to produce bile acid-glucose conjugates thanks to a bile acid glucosyl transferase activity. Catalyzes the hydrolysis of galactosylceramides/GalCers (such as beta-D-galactosyl-(1&lt;-&gt;1')-N-acylsphing-4-enine), as well as the galactosyl transfer between GalCers and cholesterol in vitro with lower activity compared with their activity against GlcCers. The polypeptide is Non-lysosomal glucosylceramidase (Homo sapiens (Human)).